The following is a 151-amino-acid chain: UPF0735 ACT domain-containing protein SH1278 (151 aa).

Residues Thr-74 to Met-149 form the ACT domain.

It belongs to the UPF0735 family.

This is UPF0735 ACT domain-containing protein SH1278 from Staphylococcus haemolyticus (strain JCSC1435).